A 649-amino-acid polypeptide reads, in one-letter code: Echinoderm microtubule-associated protein-like 2 (649 aa).

Positions Lys10 to Ala649 are tandem atypical propeller in EMLs. WD repeat units follow at residues Lys56–Val93, Arg97–Ser144, His151–Trp192, Glu195–Leu234, Lys241–Lys280, Ile285–Ser323, Phe369–Ser406, Gln410–Thr447, Leu452–Val489, Lys495–Ala535, Phe564–Tyr602, and Ala609–Val648.

It belongs to the WD repeat EMAP family. In terms of assembly, interacts with GRID2 and may also interact with GRID1. Interacts with EML3. Binds unpolymerized tubulins via its WD repeat region. Widely expressed in both brain and peripheral tissues, including brainstem and enrichment in the postsynaptic density, PSD.

Its subcellular location is the cytoplasm. The protein resides in the cytoskeleton. The protein localises to the spindle. In terms of biological role, tubulin binding protein that inhibits microtubule nucleation and growth, resulting in shorter microtubules. The polypeptide is Echinoderm microtubule-associated protein-like 2 (Eml2) (Rattus norvegicus (Rat)).